The chain runs to 159 residues: Ribosomal RNA large subunit methyltransferase H (159 aa).

Residues Leu76, Gly107, and 126-131 contribute to the S-adenosyl-L-methionine site; that span reads LSSLTL.

It belongs to the RNA methyltransferase RlmH family. As to quaternary structure, homodimer.

It is found in the cytoplasm. The enzyme catalyses pseudouridine(1915) in 23S rRNA + S-adenosyl-L-methionine = N(3)-methylpseudouridine(1915) in 23S rRNA + S-adenosyl-L-homocysteine + H(+). In terms of biological role, specifically methylates the pseudouridine at position 1915 (m3Psi1915) in 23S rRNA. This chain is Ribosomal RNA large subunit methyltransferase H, found in Cupriavidus pinatubonensis (strain JMP 134 / LMG 1197) (Cupriavidus necator (strain JMP 134)).